Reading from the N-terminus, the 245-residue chain is Ribosomal RNA small subunit methyltransferase G (245 aa).

Residues Gly85, Phe90, 108 to 110, 136 to 137, and Arg155 each bind S-adenosyl-L-methionine; these read DST and AE.

The protein belongs to the methyltransferase superfamily. RNA methyltransferase RsmG family.

The protein localises to the cytoplasm. Specifically methylates the N7 position of a guanine in 16S rRNA. The chain is Ribosomal RNA small subunit methyltransferase G from Nostoc sp. (strain PCC 7120 / SAG 25.82 / UTEX 2576).